Consider the following 43-residue polypeptide: METATLVTIFISGLLVSFTGYALYIAFGQPSQQLRDPFEEHGD.

The chain crosses the membrane as a helical span at residues 7 to 27 (VTIFISGLLVSFTGYALYIAF).

Belongs to the PsbN family.

It is found in the plastid. It localises to the chloroplast thylakoid membrane. Its function is as follows. May play a role in photosystem I and II biogenesis. This Dioscorea bulbifera (Air potato) protein is Protein PsbN.